We begin with the raw amino-acid sequence, 719 residues long: Nucleolar complex protein 2 homolog (719 aa).

Residues methionine 1–proline 24 are compositionally biased toward basic residues. Disordered stretches follow at residues methionine 1–lysine 67, leucine 86–lysine 136, and alanine 643–aspartate 719. The segment covering proline 25 to glycine 42 has biased composition (basic and acidic residues). Residues glutamate 89–aspartate 130 are compositionally biased toward acidic residues. Residues alanine 643–alanine 661 show a composition bias toward basic and acidic residues.

This sequence belongs to the NOC2 family.

It is found in the nucleus. Required for normal somatic gonad development and for regulation of germline development and proliferation. The polypeptide is Nucleolar complex protein 2 homolog (pro-2) (Caenorhabditis briggsae).